Consider the following 252-residue polypeptide: Gamma carbonic anhydrase-like 1, mitochondrial (252 aa).

A mitochondrion-targeting transit peptide spans M1–A29. Substrate-binding positions include R99–D101 and Q114–E115. H120 lines the Zn(2+) pocket. Substrate-binding residues include R148, Q160, and Y227.

The protein belongs to the gamma-class carbonic anhydrase family. As to quaternary structure, component of the mitochondrial oxidoreductase respiratory chain complex I; element of the extra matrix-exposed domain, which is attached to the membrane arm of this complex. Interacts with GAMMACA2.

The protein localises to the mitochondrion membrane. Its function is as follows. Involved in complex I assembly in mitochondria and respiration. The polypeptide is Gamma carbonic anhydrase-like 1, mitochondrial (GAMMACAL1) (Arabidopsis thaliana (Mouse-ear cress)).